Consider the following 339-residue polypeptide: Arylacetonitrilase (339 aa).

Residues 5–290 (IRVAVTQAEP…EGIVYADLDL (286 aa)) enclose the CN hydrolase domain. Catalysis depends on Glu45, which acts as the Proton acceptor. Residue Lys126 is part of the active site. Residue Cys167 is the Nucleophile of the active site.

The protein belongs to the carbon-nitrogen hydrolase superfamily. Nitrilase family.

The catalysed reaction is a nitrile + 2 H2O = a carboxylate + NH4(+). It catalyses the reaction 4-chlorophenylacetonitrile + 2 H2O = 4-chlorophenylacetate + NH4(+). Its function is as follows. Nitrilase that hydrolyzes preferentially phenylacetonitrile, (R,S)-mandelonitrile, and 3-indolylacetonitrile. The polypeptide is Arylacetonitrilase (Fusarium vanettenii (strain ATCC MYA-4622 / CBS 123669 / FGSC 9596 / NRRL 45880 / 77-13-4) (Fusarium solani subsp. pisi)).